Here is a 394-residue protein sequence, read N- to C-terminus: NAD(P)H-quinone oxidoreductase subunit H (394 aa).

It belongs to the complex I 49 kDa subunit family. As to quaternary structure, NDH-1 can be composed of about 15 different subunits; different subcomplexes with different compositions have been identified which probably have different functions.

Its subcellular location is the cellular thylakoid membrane. It carries out the reaction a plastoquinone + NADH + (n+1) H(+)(in) = a plastoquinol + NAD(+) + n H(+)(out). The catalysed reaction is a plastoquinone + NADPH + (n+1) H(+)(in) = a plastoquinol + NADP(+) + n H(+)(out). Functionally, NDH-1 shuttles electrons from an unknown electron donor, via FMN and iron-sulfur (Fe-S) centers, to quinones in the respiratory and/or the photosynthetic chain. The immediate electron acceptor for the enzyme in this species is believed to be plastoquinone. Couples the redox reaction to proton translocation, and thus conserves the redox energy in a proton gradient. Cyanobacterial NDH-1 also plays a role in inorganic carbon-concentration. The protein is NAD(P)H-quinone oxidoreductase subunit H of Thermosynechococcus vestitus (strain NIES-2133 / IAM M-273 / BP-1).